We begin with the raw amino-acid sequence, 190 residues long: dTTP/UTP pyrophosphatase (190 aa).

Residue aspartate 71 is the Proton acceptor of the active site.

This sequence belongs to the Maf family. YhdE subfamily. The cofactor is a divalent metal cation.

It localises to the cytoplasm. The enzyme catalyses dTTP + H2O = dTMP + diphosphate + H(+). It carries out the reaction UTP + H2O = UMP + diphosphate + H(+). Its function is as follows. Nucleoside triphosphate pyrophosphatase that hydrolyzes dTTP and UTP. May have a dual role in cell division arrest and in preventing the incorporation of modified nucleotides into cellular nucleic acids. This chain is dTTP/UTP pyrophosphatase, found in Xanthomonas euvesicatoria pv. vesicatoria (strain 85-10) (Xanthomonas campestris pv. vesicatoria).